The following is a 610-amino-acid chain: Nuclear factor 7, ovary (610 aa).

The 55-residue stretch at 21–75 (NVGSTYPCKRSDGSQHDADIVKTRYNKQAGREEYYVHYVGLNRRQNEWVDKSRLV) folds into the Tudor-knot domain. The tract at residues 79–127 (PPKEVETNGTDQEEMTEPTEQPDSKTPQKRKLEEPEPEPKKAKVEDKDA) is disordered. T104 bears the Phosphothreonine; by CDK1 mark. The segment covering 108–127 (RKLEEPEPEPKKAKVEDKDA) has biased composition (basic and acidic residues). Residues 146–186 (CPLCVELFKDPVMVACGHNFCRSCIDKVWEGQSSFACPECK) form an RING-type zinc finger. A B box-type zinc finger spans residues 220 to 261 (RPLEKCSEHDERLKLYCKDDGTLGCVICRDSLKHASHNFLPI). Zn(2+) contacts are provided by C225, H228, C247, and H253. A coiled-coil region spans residues 295 to 374 (DKIEQHNKNV…AKERMEETDS (80 aa)). In terms of domain architecture, B30.2/SPRY spans 415-610 (PIQYIMWKEL…VDALRFVHNQ (196 aa)).

Monomer. Abundant in oocytes. At the neurula stage, low expression in dorsal embryo region including neural folds and somites.

The protein resides in the nucleus. Transcription factor that determines dorsal-ventral body axis. This is Nuclear factor 7, ovary from Xenopus laevis (African clawed frog).